The sequence spans 1115 residues: Phytochrome E (1115 aa).

The GAF domain maps to 213–383 (DIGTLCDTVV…AFSLQLYMEL (171 aa)). Residue cysteine 318 participates in phytochromobilin binding. One can recognise a PAS 1 domain in the interval 598 to 669 (MALELVRLVE…ALMCRALQGE (72 aa)). Residues 672–728 (RNVEVKLLKFGNHPTKEVVYLVVNACTSRDYKNDIIGVCFVGQDITPEKAVMDKFVR) form the PAC domain. Positions 732 to 803 (DYEAIIQSLN…DALTKFMILL (72 aa)) constitute a PAS 2 domain. In terms of domain architecture, Histidine kinase spans 880–1100 (YIQQQMKNPL…YFLIDLDFKT (221 aa)).

It belongs to the phytochrome family. Homodimer. Post-translationally, contains one covalently linked phytochromobilin chromophore.

Regulatory photoreceptor which exists in two forms that are reversibly interconvertible by light: the Pr form that absorbs maximally in the red region of the spectrum and the Pfr form that absorbs maximally in the far-red region. Photoconversion of Pr to Pfr induces an array of morphogenic responses, whereas reconversion of Pfr to Pr cancels the induction of those responses. Pfr controls the expression of a number of nuclear genes including those encoding the small subunit of ribulose-bisphosphate carboxylase, chlorophyll A/B binding protein, protochlorophyllide reductase, rRNA, etc. It also controls the expression of its own gene(s) in a negative feedback fashion. This chain is Phytochrome E (PHYE), found in Ipomoea nil (Japanese morning glory).